The following is an 817-amino-acid chain: MEEEGHKSLTSHLPQSSSSLSQSREIAKEFTSNIPPPTIKTNSSSSNILKPRLSLQNEVNQLKPAKFPSKMLPPGSLASVKSSSLAKKARPFTASSNPRMPKSAHPISSRSVSASSHFGRPASAVSSSLNSSDDVRSMSDESMESYNDEKSVNASALRTTEDRLRSMEMAYAQLSAKVIPSPSKRPANYKFYEQRIAMLEESLEVERSRTSELQEQFSVALREKAEAEANKIVSQKGMESLEIMLNSMKSENHQRMAMLEENHARVMETAELQHQAELQDFASNIEQKANSLIMEYKNELQSAEEHFSHKIKELTSENELKISRLQEEKDSLLKKVQEGASLAMQRVQNKHDLEKKRLQSAIQPLQEENNSLKQQIEQLQRELASETVVKENLKSSLDQQSANVQKLESTNRALESTIKTLEEDVYTMKNKIIELEGILKSANVERDGLVEKLIAEETLRRKLHNTIQELKGNIRVFCRVRPPLGDGESAQIAFPDQNSEASTIEIVAQAPGSSLTGNGIKQYAFNFDRVFSPETTNEDVFNELSQLIQSAMDGYNVCIFAYGQTGSGKTHTMSSNTGMIPSSVRMIYNRSTSLKERGWEYRMEGQFLEIYNETIIDLLASGNEEEKGKKKLEIYHDTKAGRTTITNITSEPLDTPEQVTWLLDQASKNRSVAATNANEHSSRSHSVFMLHLNGSNSTTGETCRSTLNLIDLAGSERLSSSQSVGERLKETQAINKSLSCLGDVIHALGSGKEGTYIPYRNSKLTNLLQYSLGGNSKTLMFVNISPLKQHVPETLCSLRFATKVNNTQIGTARKVTK.

The tract at residues 1 to 155 (MEEEGHKSLT…YNDEKSVNAS (155 aa)) is disordered. A compositionally biased stretch (low complexity) spans 8–23 (SLTSHLPQSSSSLSQS). A compositionally biased stretch (polar residues) spans 39-60 (IKTNSSSSNILKPRLSLQNEVN). Positions 76 to 86 (SLASVKSSSLA) are enriched in low complexity. Over residues 106–116 (PISSRSVSASS) the composition is skewed to polar residues. Over residues 122–132 (ASAVSSSLNSS) the composition is skewed to low complexity. Residues 155 to 242 (SALRTTEDRL…VSQKGMESLE (88 aa)) adopt a coiled-coil conformation. ATP contacts are provided by asparagine 473, arginine 475, arginine 479, glutamate 543, glycine 566, serine 567, glycine 568, lysine 569, threonine 570, and threonine 778. Residues 473–807 (NIRVFCRVRP…LRFATKVNNT (335 aa)) enclose the Kinesin motor domain.

The protein belongs to the TRAFAC class myosin-kinesin ATPase superfamily. Kinesin family. NCD subfamily.

The protein resides in the cytoplasm. It is found in the cytoskeleton. It localises to the spindle. Its subcellular location is the nucleus. It carries out the reaction ATP + H2O = ADP + phosphate + H(+). The enzyme catalyses ATP + H2O + a kinesin associated with a microtubule at position (n) = ADP + phosphate + a kinesin associated with a microtubule at position (n-1, toward the minus end).. Its function is as follows. Minus end-directed microtubule (MT) motor that is involved in spindle microtubule shortening, kinetochore capture, and polarization of cytoplasmic microtubules. During mitosis, promotes spindle microtubule shortening by depolymerization. During metaphase, involved in the recapture of kinetochores displaced from the spindle and their transport towards the spindle pole body; promotes transport both by microtubule end-on pulling and by lateral sliding along the side of the microtubule. During interphase, required for the polarization of cytoplasmic microtubules where it orients the microtubule plus ends toward the cell ends and the minus ends toward the cell center. Required for karyogamy. This chain is Kinesin-like protein 2, found in Schizosaccharomyces pombe (strain 972 / ATCC 24843) (Fission yeast).